A 274-amino-acid polypeptide reads, in one-letter code: Formamidopyrimidine-DNA glycosylase (274 aa).

The active-site Schiff-base intermediate with DNA is the Pro2. Glu3 functions as the Proton donor in the catalytic mechanism. Lys58 serves as the catalytic Proton donor; for beta-elimination activity. The DNA site is built by His91 and Arg110. Residues 238-272 form an FPG-type zinc finger; it reads QVYDKTGQECVRCGTIIEKIQLGGRGTHFCPNCQR. The active-site Proton donor; for delta-elimination activity is the Arg262.

This sequence belongs to the FPG family. As to quaternary structure, monomer. Zn(2+) serves as cofactor.

The enzyme catalyses Hydrolysis of DNA containing ring-opened 7-methylguanine residues, releasing 2,6-diamino-4-hydroxy-5-(N-methyl)formamidopyrimidine.. The catalysed reaction is 2'-deoxyribonucleotide-(2'-deoxyribose 5'-phosphate)-2'-deoxyribonucleotide-DNA = a 3'-end 2'-deoxyribonucleotide-(2,3-dehydro-2,3-deoxyribose 5'-phosphate)-DNA + a 5'-end 5'-phospho-2'-deoxyribonucleoside-DNA + H(+). Involved in base excision repair of DNA damaged by oxidation or by mutagenic agents. Acts as a DNA glycosylase that recognizes and removes damaged bases. Has a preference for oxidized purines, such as 7,8-dihydro-8-oxoguanine (8-oxoG). Has AP (apurinic/apyrimidinic) lyase activity and introduces nicks in the DNA strand. Cleaves the DNA backbone by beta-delta elimination to generate a single-strand break at the site of the removed base with both 3'- and 5'-phosphates. The chain is Formamidopyrimidine-DNA glycosylase from Streptococcus pneumoniae (strain ATCC BAA-255 / R6).